We begin with the raw amino-acid sequence, 237 residues long: V-type proton ATPase subunit E (237 aa).

Belongs to the V-ATPase E subunit family. In terms of assembly, V-ATPase is a heteromultimeric enzyme composed of a peripheral catalytic V1 complex (components A to H) attached to an integral membrane V0 proton pore complex (components: a, c, c', c'' and d).

In terms of biological role, subunit of the peripheral V1 complex of vacuolar ATPase essential for assembly or catalytic function. V-ATPase is responsible for acidifying a variety of intracellular compartments in eukaryotic cells. This is V-type proton ATPase subunit E (VATE) from Gossypium hirsutum (Upland cotton).